A 271-amino-acid polypeptide reads, in one-letter code: MERRTVLITGCSQGGIGSALAEAFHQRGFHVFATARKTEKMTHLRDLDWMTLIPLDVTQESQISAAVELIQKHTGGTLDYLVNNAGDGYIIPVLDCDQVHGRQIFEVNFWGPLRMIQEFSPLLIAARGTIVNINSVASETLPLWLGIYSSSKAALLALSETLRLELKPFGVQVLSVMTGAVQTMIFQTNYRLPPDSAYVAWEKQIAAQAEGSEQASRMSATVYAERVVGDILNRRGGITYRGQMASFAYWVVALMPRFLRDLVTVKMAGIS.

Residues isoleucine 8, threonine 34, lysine 40, aspartate 56, asparagine 84, tyrosine 148, lysine 152, valine 181, and threonine 183 each contribute to the NADP(+) site. Tyrosine 148 serves as the catalytic Proton acceptor. The active-site Lowers pKa of active site Tyr is lysine 152.

This sequence belongs to the short-chain dehydrogenases/reductases (SDR) family.

It functions in the pathway secondary metabolite biosynthesis. In terms of biological role, short-chain dehydrogenase; part of the gene cluster that mediates the biosynthesis of the indole diterpenes penitrems. The geranylgeranyl diphosphate (GGPP) synthase ptmG catalyzes the first step in penitrem biosynthesis via conversion of farnesyl pyrophosphate and isopentyl pyrophosphate into geranylgeranyl pyrophosphate (GGPP). Condensation of indole-3-glycerol phosphate with GGPP by the prenyl transferase ptmC then forms 3-geranylgeranylindole (3-GGI). Epoxidation by the FAD-dependent monooxygenase ptmM leads to a epoxidized-GGI that is substrate of the terpene cyclase ptmB for cyclization to yield paspaline. Paspaline is subsequently converted to 13-desoxypaxilline by the cytochrome P450 monooxygenase ptmP, the latter being then converted to paxilline by the cytochrome P450 monooxygenase ptmQ. Paxilline is converted to beta-paxitriol via C-10 ketoreduction by the short-chain dehydrogenase ptmH which can be monoprenylated at the C-20 by the indole diterpene prenyltransferase ptmD. A two-step elimination (acetylation and elimination) process performed by the O-acetyltransferase ptmV and ptmI leads to the production of the prenylated form of penijanthine. The FAD-linked oxidoreductase ptmO then converts the prenylated form of penijanthine into PC-M5 which is in turn transformed into PC-M4 by the aromatic dimethylallyltransferase ptmE. Five sequential oxidative transformations performed by the cytochrome P450 monooxygenases ptmK, ptmU, ptmL, ptmN and ptmJ yield the various penitrem compounds. PtmK, ptmU and ptmM are involved in the formation of the key bicyclic ring of penitrem C via the formation of the intermediates secopenitrem D and penitrem D. PtmL catalyzes the epoxidation of penitrem D and C to yield penitrem B and F, respectively. PtmJ catalyzes the last benzylic hydroxylation to convert penitrem B to prenitrem E and penitrem F to penitrem A. The polypeptide is Short-chain dehydrogenase ptmH (Penicillium ochrochloron).